The sequence spans 202 residues: dITP/XTP pyrophosphatase (202 aa).

Substrate is bound at residue 11-16; that stretch reads TNNANK. Residue Asp-73 is the Proton acceptor of the active site. Asp-73 is a Mg(2+) binding site. Substrate-binding positions include Ser-74, 155 to 158, Lys-178, and 183 to 184; these read FGYD and HR.

This sequence belongs to the HAM1 NTPase family. As to quaternary structure, homodimer. The cofactor is Mg(2+).

It catalyses the reaction XTP + H2O = XMP + diphosphate + H(+). It carries out the reaction dITP + H2O = dIMP + diphosphate + H(+). The enzyme catalyses ITP + H2O = IMP + diphosphate + H(+). Pyrophosphatase that catalyzes the hydrolysis of nucleoside triphosphates to their monophosphate derivatives, with a high preference for the non-canonical purine nucleotides XTP (xanthosine triphosphate), dITP (deoxyinosine triphosphate) and ITP. Seems to function as a house-cleaning enzyme that removes non-canonical purine nucleotides from the nucleotide pool, thus preventing their incorporation into DNA/RNA and avoiding chromosomal lesions. This is dITP/XTP pyrophosphatase from Lactiplantibacillus plantarum (strain ATCC BAA-793 / NCIMB 8826 / WCFS1) (Lactobacillus plantarum).